The chain runs to 460 residues: Phosphomethylpyrimidine synthase (460 aa).

Substrate-binding positions include N80, M109, Y138, H174, 194 to 196 (SRG), 235 to 238 (DSLR), and E274. H278 is a binding site for Zn(2+). Y301 lines the substrate pocket. Residue H342 participates in Zn(2+) binding. Positions 422, 425, and 430 each coordinate [4Fe-4S] cluster.

It belongs to the ThiC family. As to quaternary structure, homodimer. Requires [4Fe-4S] cluster as cofactor.

It catalyses the reaction 5-amino-1-(5-phospho-beta-D-ribosyl)imidazole + S-adenosyl-L-methionine = 4-amino-2-methyl-5-(phosphooxymethyl)pyrimidine + CO + 5'-deoxyadenosine + formate + L-methionine + 3 H(+). The protein operates within cofactor biosynthesis; thiamine diphosphate biosynthesis. Catalyzes the synthesis of the hydroxymethylpyrimidine phosphate (HMP-P) moiety of thiamine from aminoimidazole ribotide (AIR) in a radical S-adenosyl-L-methionine (SAM)-dependent reaction. This Sulfurimonas denitrificans (strain ATCC 33889 / DSM 1251) (Thiomicrospira denitrificans (strain ATCC 33889 / DSM 1251)) protein is Phosphomethylpyrimidine synthase.